The primary structure comprises 63 residues: Keratin-associated protein 19-7 (63 aa).

This sequence belongs to the KRTAP type 19 family. In terms of assembly, interacts with hair keratins.

In the hair cortex, hair keratin intermediate filaments are embedded in an interfilamentous matrix, consisting of hair keratin-associated proteins (KRTAP), which are essential for the formation of a rigid and resistant hair shaft through their extensive disulfide bond cross-linking with abundant cysteine residues of hair keratins. The matrix proteins include the high-sulfur and high-glycine-tyrosine keratins. The chain is Keratin-associated protein 19-7 (KRTAP19-7) from Homo sapiens (Human).